The chain runs to 540 residues: Chaperonin GroEL (540 aa).

Residues 29 to 32 (TLGP), 86 to 90 (DGTTT), G413, and D495 contribute to the ATP site.

This sequence belongs to the chaperonin (HSP60) family. Forms a cylinder of 14 subunits composed of two heptameric rings stacked back-to-back. Interacts with the co-chaperonin GroES.

It localises to the cytoplasm. It carries out the reaction ATP + H2O + a folded polypeptide = ADP + phosphate + an unfolded polypeptide.. Functionally, together with its co-chaperonin GroES, plays an essential role in assisting protein folding. The GroEL-GroES system forms a nano-cage that allows encapsulation of the non-native substrate proteins and provides a physical environment optimized to promote and accelerate protein folding. In Caldanaerobacter subterraneus subsp. tengcongensis (strain DSM 15242 / JCM 11007 / NBRC 100824 / MB4) (Thermoanaerobacter tengcongensis), this protein is Chaperonin GroEL.